The chain runs to 408 residues: Hepatocyte nuclear factor 4-gamma (408 aa).

A DNA-binding region (nuclear receptor) is located at residues 9-84 (NCLCAICGDR…AGMKKEAVQN (76 aa)). 2 consecutive NR C4-type zinc fingers follow at residues 12 to 32 (CAIC…CDGC) and 48 to 72 (CRFS…LRKC). Residue serine 94 is modified to Phosphoserine. Positions 99-328 (SNIPSINTLA…NLLQEMLLGG (230 aa)) constitute an NR LBD domain. Positions 368 to 390 (ISTPETPLPSPPQGSGQEQYKIA) are disordered. Threonine 370 and threonine 373 each carry phosphothreonine. The residue at position 377 (serine 377) is a Phosphoserine.

It belongs to the nuclear hormone receptor family. NR2 subfamily. Expressed in pancreas, kidney, small intestine and testis. Weakly expressed in colon. Not expressed in liver, skeletal muscle, lung, placenta, brain, heart, peripheral blood, ovary, prostate, thymus and spleen.

It localises to the nucleus. Transcription factor. Has a lower transcription activation potential than HNF4-alpha. The sequence is that of Hepatocyte nuclear factor 4-gamma (HNF4G) from Homo sapiens (Human).